The sequence spans 161 residues: Large ribosomal subunit protein bL9 (161 aa).

Belongs to the bacterial ribosomal protein bL9 family.

Functionally, binds to the 23S rRNA. The chain is Large ribosomal subunit protein bL9 from Protochlamydia amoebophila (strain UWE25).